Here is a 319-residue protein sequence, read N- to C-terminus: Ankyrin repeat domain-containing protein 1 (319 aa).

The stretch at 61–89 forms a coiled coil; that stretch reads KSEKQREAELKKKKLEQRSKLENLEDLEI. 5 ANK repeats span residues 152-181, 185-214, 218-247, 251-280, and 284-315; these read YKRT…QIEF, LEST…KISA, LLST…DLNA, EGDT…DLNI, and AGKT…KTSR.

In terms of assembly, interacts with YBX1. Interacts with TTN/titin. Mainly expressed in activated vascular endothelial cells. To a lower extent, also expressed in hepatoma cells.

It is found in the nucleus. Functionally, may play an important role in endothelial cell activation. May act as a nuclear transcription factor that negatively regulates the expression of cardiac genes. Induction seems to be correlated with apoptotic cell death in hepatoma cells. In Homo sapiens (Human), this protein is Ankyrin repeat domain-containing protein 1 (ANKRD1).